Consider the following 658-residue polypeptide: Glycogen debranching enzyme (658 aa).

Asp-336 acts as the Nucleophile in catalysis. Residue Glu-371 is the Proton donor of the active site. A disordered region spans residues 459–484; sequence EANGEENRDGTNSNYSDNHGKEGLGG.

It belongs to the glycosyl hydrolase 13 family.

It carries out the reaction Hydrolysis of (1-&gt;6)-alpha-D-glucosidic linkages to branches with degrees of polymerization of three or four glucose residues in limit dextrin.. The protein operates within glycan degradation; glycogen degradation. Its function is as follows. Removes maltotriose and maltotetraose chains that are attached by 1,6-alpha-linkage to the limit dextrin main chain, generating a debranched limit dextrin. The sequence is that of Glycogen debranching enzyme from Salmonella paratyphi B (strain ATCC BAA-1250 / SPB7).